The sequence spans 663 residues: MGRYRVRVVTGAWLFSGSLNLVRLWLVGEHREAKLELQLRPARGKEEEFDFDVPEDLGPLQFVKLHKQHTVVDDAWFCNLITVQGPGTSAEAVFPCYRWVQGEGILSLPEGTARLAGDNALDVFQKYREKELKERQQTYCWATWKEGLPQTIAADCKDDLPPNMRFHEEKRLDFEWTLKAGVLEMGLKRVYTLLRSWNHLEDFDQIFWGQKSALAEKVHQCWQEDELFGYQFLNGANPMLLRRSTSLPSRLVLPSGMEELQAQLEKELKNGSLFEADFILLDGIPANVIRGEPQYLAAPLVMLRMDPGGKLLPMAIQIQPPNPSSPAPTLFLPSDPPLAWLLAKIWVRNSDFQLQELQFHLLNTHLVAEVIAVATMRCLPGLHPIFKLLVPHIRYTMEINTRSRTQLISDGGIFDQVVSTGGGGHVQLLTRAVAQLTYHSLCPPDDLANRGLLRIPSALYARDALQLWEVTARYVKGMVHLFYQSDDIVRGDPELQAWCREITEVGLCHAQDRGFPVSFQSRAQLCHFLTMCVFTCTAQHAAINQGQLDWYGWVPNAPCTMRMPPPTSKDDVTMETVMGSLPDVQKACLQMTITWHLGRLQPDMVPLGHHTEKYFSDPRTKAVLSQFQADLDNLEKEITARNEQLDLPYEYLKPSRIENSITI.

Positions 2-114 (GRYRVRVVTG…ILSLPEGTAR (113 aa)) constitute a PLAT domain. One can recognise a Lipoxygenase domain in the interval 115 to 663 (LAGDNALDVF…PSRIENSITI (549 aa)). Ser246 is modified (phosphoserine). The Fe cation site is built by His360, His365, His540, Asn544, and Ile663.

This sequence belongs to the lipoxygenase family. It depends on Fe cation as a cofactor. As to expression, found primarily in platelets and in microsomal and cytosolic fractions of the epidermis (at protein level).

It localises to the cytoplasm. It is found in the cytosol. The protein localises to the membrane. It carries out the reaction (5Z,8Z,11Z,14Z)-eicosatetraenoate + O2 = (12S)-hydroperoxy-(5Z,8Z,10E,14Z)-eicosatetraenoate. It catalyses the reaction (9Z,12Z)-octadecadienoate + O2 = (13S)-hydroperoxy-(9Z,11E)-octadecadienoate. The catalysed reaction is 2 leukotriene A4 + O2 + 2 H2O = 2 lipoxin A4. The enzyme catalyses 2 leukotriene A4 + O2 + 2 H2O = 2 lipoxin B4. It carries out the reaction (5Z,8Z,11Z)-eicosatrienoate + O2 = (12S)-hydroperoxy-(5Z,8Z,10E)-eicosatrienoate. It catalyses the reaction (8Z,11Z,14Z)-eicosatrienoate + O2 = (12S)-hydroperoxy-(8Z,10E,14Z)-eicosatrienoate. The catalysed reaction is (4Z,7Z,10Z,13Z,16Z,19Z)-docosahexaenoate + O2 = (14S)-hydroperoxy-(4Z,7Z,10Z,12E,16Z,19Z)-docosahexaenoate. The enzyme catalyses (7S)-hydroperoxy-(4Z,8E,10Z,13Z,16Z,19Z)-docosahexaenoate + O2 = (7S,14S)-dihydroperoxy-(4Z,8E,10Z,12E,16Z,19Z)-docosahexaenoate. It carries out the reaction (7S)-hydroperoxy-(4Z,8E,10Z,13Z,16Z,19Z)-docosahexaenoate + O2 = (7S,17S)-dihydroperoxy-(4Z,8E,10Z,13Z,15E,19Z)-docosahexaenoate. It catalyses the reaction (14R,15S)-epoxy-(5Z,8Z,11Z)-eicosatrienoate + O2 = (12S)-hydroperoxy-(14R,15S)-epoxy-(5Z,8Z,10E)-eicosatrienoate. The catalysed reaction is (14S,15R)-epoxy-(5Z,8Z,11Z)-eicosatrienoate + O2 = (12S)-hydroperoxy-(14S,15R)-epoxy-(5Z,8Z,10E)-eicosatrienoate. The enzyme catalyses (5Z,8Z,11Z,14Z)-eicosatetraenoate + O2 = (15S)-hydroperoxy-(5Z,8Z,11Z,13E)-eicosatetraenoate. It carries out the reaction (14S)-hydroperoxy-(4Z,7Z,10Z,12E,16Z,19Z)-docosahexaenoate = (13S,14S)-epoxy-(4Z,7Z,9E,11E,16Z,19Z)-docosahexaenoate + H2O. It catalyses the reaction N-(5Z,8Z,11Z,14Z)-eicosatetraenoyl-L-alanine + O2 = N-(15S)-hydroperoxy-(5Z,8Z,11Z,13E)-eicosatetraenoyl-alanine. The catalysed reaction is N-(5Z,8Z,11Z,14Z)-eicosatetraenoyl-L-alanine + O2 = N-(12S)-hydroperoxy-(5Z,8Z,10E,14Z)-eicosatetraenoyl-alanine. The enzyme catalyses N-(5Z,8Z,11Z,14Z)-eicosatetraenoyl-gamma-aminobutanoate + O2 = N-(15S)-hydroperoxy-(5Z,8Z,11Z,13E)-eicosatetraenoyl-gamma-aminobutanoate. It carries out the reaction N-(5Z,8Z,11Z,14Z)-eicosatetraenoyl-gamma-aminobutanoate + O2 = N-(12S)-hydroperoxy-(5Z,8Z,10E,14Z)-eicosatetraenoyl-gamma-aminobutanoate. It catalyses the reaction N-(5Z,8Z,11Z,14Z)-eicosatetraenoyl-glycine + O2 = N-(15S)-hydroperoxy-(5Z,8Z,11Z,13E)-eicosatetraenoyl-glycine. The catalysed reaction is N-(5Z,8Z,11Z,14Z)-eicosatetraenoyl-glycine + O2 = N-(12S)-hydroperoxy-(5Z,8Z,10E,14Z)-eicosatetraenoyl-glycine. The enzyme catalyses N-(5Z,8Z,11Z,14Z)-eicosatetraenoyl-taurine + O2 = N-(12S)-hydroperoxy-(5Z,8Z,10E,14Z)-eicosatetraenoyl-taurine. It carries out the reaction N-(5Z,8Z,11Z,14Z)-eicosatetraenoyl-taurine + O2 = N-(15S)-hydroperoxy-(5Z,8Z,11Z,13E)-eicosatetraenoyl-taurine. It catalyses the reaction (5Z,8Z,11Z,14Z,17Z)-eicosapentaenoate + O2 = (12S)-hydroperoxy-(5Z,8Z,10E,14Z,17Z)-eicosapentaenoate. It functions in the pathway lipid metabolism; hydroperoxy eicosatetraenoic acid biosynthesis. Activated by EGF. Arachidonic acid conversion is inhibited by (13S,14S)-epoxy-(4Z,7Z,9E,11E,16Z,19Z)-docosahexaenoate (13S,14S-epoxy-DHA). Arachidonate 12-lipoxygenase activity is decreased when PH decreases from 7.4 to 6. Catalyzes the regio and stereo-specific incorporation of molecular oxygen into free and esterified polyunsaturated fatty acids generating lipid hydroperoxides that can be further reduced to the corresponding hydroxy species. Mainly converts arachidonate ((5Z,8Z,11Z,14Z)-eicosatetraenoate) to the specific bioactive lipid (12S)-hydroperoxyeicosatetraenoate/(12S)-HPETE. Through the production of bioactive lipids like (12S)-HPETE it regulates different biological processes including platelet activation. It can also catalyze the epoxidation of double bonds of polyunsaturated fatty acids such as (14S)-hydroperoxy-docosahexaenoate/(14S)-HPDHA resulting in the formation of (13S,14S)-epoxy-DHA. Furthermore, it may participate in the sequential oxidations of DHA ((4Z,7Z,10Z,13Z,16Z,19Z)-docosahexaenoate) to generate specialized pro-resolving mediators (SPMs) like resolvin D5 ((7S,17S)-diHPDHA) and (7S,14S)-diHPDHA, that actively down-regulate the immune response and have anti-aggregation properties with platelets. An additional function involves a multistep process by which it transforms leukotriene A4/LTA4 into the bioactive lipids lipoxin A4/LXA4 and lipoxin B4/LXB4, both are vasoactive and LXA4 may regulate neutrophil function via occupancy of specific recognition sites. Can also peroxidize linoleate ((9Z,12Z)-octadecadienoate) to (13S)-hydroperoxyoctadecadienoate/ (13S-HPODE). Due to its role in regulating both the expression of the vascular endothelial growth factor (VEGF, an angiogenic factor involved in the survival and metastasis of solid tumors) and the expression of integrin beta-1 (known to affect tumor cell migration and proliferation), it can be regarded as protumorigenic. Important for cell survival, as it may play a role not only in proliferation but also in the prevention of apoptosis in vascular smooth muscle cells. This Mus musculus (Mouse) protein is Polyunsaturated fatty acid lipoxygenase ALOX12 (Alox12).